The sequence spans 88 residues: Large ribosomal subunit protein bL27 (88 aa).

It belongs to the bacterial ribosomal protein bL27 family.

This Mycolicibacterium smegmatis (strain ATCC 700084 / mc(2)155) (Mycobacterium smegmatis) protein is Large ribosomal subunit protein bL27.